Reading from the N-terminus, the 394-residue chain is Upstream-binding factor 1-like protein 1 (394 aa).

The HMG box 1 DNA-binding region spans Pro-101–Lys-169. Residues Gln-167–Lys-180 are compositionally biased toward basic residues. A disordered region spans residues Gln-167–Gly-197. Polar residues predominate over residues Val-183–Gly-197. The segment at residues Arg-225 to Leu-291 is a DNA-binding region (HMG box 2). Residues Ala-305–Asp-394 form a disordered region.

Its subcellular location is the cytoplasm. It is found in the nucleus. Its function is as follows. Essential for proliferation of the inner cell mass and trophectodermal cells in peri-implantation development. The protein is Upstream-binding factor 1-like protein 1 of Mus musculus (Mouse).